The sequence spans 1358 residues: Regulatory protein SIR4 (1358 aa).

A compositionally biased stretch (polar residues) spans 1-15; the sequence is MPNDNKTPNRSSTPK. Disordered regions lie at residues 1-98, 252-277, 356-466, 498-544, 677-726, 752-787, and 913-970; these read MPND…PHSN, SLSV…SPGI, HDEK…PPEI, VQGE…ISNG, ASTE…EDEQ, VSDS…DLDT, and HSQE…ENLS. Residues 26 to 39 show a composition bias toward basic and acidic residues; it reads KIPEREEKSNEVKT. 2 stretches are compositionally biased toward polar residues: residues 49 to 66 and 75 to 96; these read KSKN…SPHQ and HKQL…SFPH. Residues 373–388 show a composition bias toward basic and acidic residues; it reads QKMKEDADLKRMEILK. Over residues 428 to 437 the composition is skewed to polar residues; that stretch reads QENNYNSTSR. The segment covering 452–464 has biased composition (basic and acidic residues); that stretch reads KNGENKKIGKRPP. Residues 507–517 are compositionally biased toward polar residues; it reads RNNTLNVTPSK. At S692 the chain carries Phosphoserine. The segment covering 706-720 has biased composition (polar residues); that stretch reads FPVSLSQPSKKSFAN. A compositionally biased stretch (acidic residues) spans 754–766; that stretch reads DSDDSSSDNDSLT. Positions 777 to 787 are enriched in basic and acidic residues; that stretch reads NEIKVTNDLDT. The span at 916-932 shows a compositional bias: polar residues; sequence EQNSSSAKPSQIPTVSS. K1128 participates in a covalent cross-link: Glycyl lysine isopeptide (Lys-Gly) (interchain with G-Cter in SUMO). The stretch at 1271–1347 forms a coiled coil; that stretch reads LSFVDIVLSK…DAKINKLMEK (77 aa).

As to quaternary structure, homodimer. Interacts with MPS3. Interacts with RIS1. Interacts with SIR1, SIR2 and SIR3. Interacts with YKU80. Interacts with UBP10. Interacts with RAP1 (via C-terminus).

The protein localises to the nucleus. Functionally, the proteins SIR1 through SIR4 are required for transcriptional repression of the silent mating type loci, HML and HMR. The proteins SIR2 through SIR4 repress mulitple loci by modulating chromatin structure. Involves the compaction of chromatin fiber into a more condensed form. The protein is Regulatory protein SIR4 (SIR4) of Saccharomyces cerevisiae (strain ATCC 204508 / S288c) (Baker's yeast).